The chain runs to 198 residues: Na(+)-translocating NADH-quinone reductase subunit E (198 aa).

A run of 6 helical transmembrane segments spans residues 11 to 31, 39 to 59, 77 to 97, 110 to 130, 140 to 160, and 176 to 196; these read SIFI…FLAV, FGLG…NNLV, FLNF…LEMI, GIFL…SFMV, VVYG…LAGI, and LGIT…FSGV.

The protein belongs to the NqrDE/RnfAE family. As to quaternary structure, composed of six subunits; NqrA, NqrB, NqrC, NqrD, NqrE and NqrF.

It localises to the cell inner membrane. The enzyme catalyses a ubiquinone + n Na(+)(in) + NADH + H(+) = a ubiquinol + n Na(+)(out) + NAD(+). Its function is as follows. NQR complex catalyzes the reduction of ubiquinone-1 to ubiquinol by two successive reactions, coupled with the transport of Na(+) ions from the cytoplasm to the periplasm. NqrA to NqrE are probably involved in the second step, the conversion of ubisemiquinone to ubiquinol. The polypeptide is Na(+)-translocating NADH-quinone reductase subunit E (Vibrio vulnificus (strain CMCP6)).